We begin with the raw amino-acid sequence, 264 residues long: Pimeloyl-[acyl-carrier protein] methyl ester esterase (264 aa).

Residues 23 to 244 (LVMLHGWGVN…MLAKASHAPF (222 aa)) form the AB hydrolase-1 domain. Residues Trp-29, 87–88 (SL), and 150–154 (FLAIQ) each bind substrate. The active-site Nucleophile is Ser-87. Active-site residues include Asp-214 and His-241. Position 241 (His-241) interacts with substrate.

This sequence belongs to the AB hydrolase superfamily. Carboxylesterase BioH family. Monomer.

Its subcellular location is the cytoplasm. The enzyme catalyses 6-carboxyhexanoyl-[ACP] methyl ester + H2O = 6-carboxyhexanoyl-[ACP] + methanol + H(+). It participates in cofactor biosynthesis; biotin biosynthesis. The physiological role of BioH is to remove the methyl group introduced by BioC when the pimeloyl moiety is complete. It allows to synthesize pimeloyl-ACP via the fatty acid synthetic pathway through the hydrolysis of the ester bonds of pimeloyl-ACP esters. The chain is Pimeloyl-[acyl-carrier protein] methyl ester esterase from Shewanella sp. (strain MR-7).